Consider the following 657-residue polypeptide: Kinesin-like protein KIF22 (657 aa).

The segment at 1–33 (MNVRAKKKPQQREMASASSGPSRSLSKGGVSRR) is disordered. Residues 16 to 33 (SASSGPSRSLSKGGVSRR) show a composition bias toward low complexity. The 323-residue stretch at 38-360 (RVRVAVRLRP…LNFTARSKEV (323 aa)) folds into the Kinesin motor domain. 119–126 (GPTGAGKT) contacts ATP. Positions 388 to 415 (PSEAKKAKGPEEESTGSPESTAAPASAS) are disordered. Low complexity predominate over residues 402-415 (TGSPESTAAPASAS). Residues Ser404, Ser419, and Ser444 each carry the phosphoserine modification. Lys457 is covalently cross-linked (Glycyl lysine isopeptide (Lys-Gly) (interchain with G-Cter in SUMO2)). Positions 457–502 (KRERMVLIKTVEEKNLEIERLKMKQKELEAKVLAQEALDPKEKENT) form a coiled coil. A phosphoserine mark is found at Ser537, Ser554, and Ser573.

The protein belongs to the TRAFAC class myosin-kinesin ATPase superfamily. Kinesin family. Interacts with FAM83D and SIAH1. In terms of processing, ubiquitinated; mediated by SIAH1 and leading to its subsequent proteasomal degradation.

The protein localises to the nucleus. The protein resides in the cytoplasm. Its subcellular location is the cytoskeleton. Functionally, kinesin family member that is involved in spindle formation and the movements of chromosomes during mitosis and meiosis. Binds to microtubules and to DNA. Plays a role in congression of laterally attached chromosomes in NDC80-depleted cells. This is Kinesin-like protein KIF22 (Kif22) from Rattus norvegicus (Rat).